Consider the following 510-residue polypeptide: Leucine-rich repeat protein lrrA (510 aa).

20 LRR repeats span residues 14–34 (YRKR…PPTI), 35–59 (GALQ…IGKL), 60–82 (SKVE…IGSL), 84–106 (TLKQ…NIGA), 107–130 (LKNL…ISNC), 132–152 (ALEY…EFGK), 153–176 (LYNL…ISGW), 177–200 (VKLE…CLLG), 202–222 (LSTL…LSSM), 224–245 (SLTN…LSNL), 246–270 (RQLK…LLSE), 272–292 (IELD…IATL), 293–315 (INLQ…VGNL), 316–340 (INLQ…IGKL), 341–363 (VNLK…IASM), 365–386 (ALKE…IGEL), 387–408 (SGLT…SFGN), 410–432 (SELQ…LDGL), 433–458 (KSCT…LIGL), and 460–478 (ILDV…IVMK).

It localises to the cytoplasm. In terms of biological role, involved in cytoskeleton remodeling, which is needed for normal chemotactic aggregation and efficient cell sorting during multicellular morphogenesis. This is Leucine-rich repeat protein lrrA (lrrA) from Dictyostelium discoideum (Social amoeba).